The following is a 179-amino-acid chain: Dual-action ribosomal maturation protein DarP (179 aa).

The protein belongs to the DarP family.

It localises to the cytoplasm. Member of a network of 50S ribosomal subunit biogenesis factors which assembles along the 30S-50S interface, preventing incorrect 23S rRNA structures from forming. Promotes peptidyl transferase center (PTC) maturation. The sequence is that of Dual-action ribosomal maturation protein DarP from Aliivibrio fischeri (strain ATCC 700601 / ES114) (Vibrio fischeri).